Here is a 156-residue protein sequence, read N- to C-terminus: Small ribosomal subunit protein uS7 (156 aa).

The protein belongs to the universal ribosomal protein uS7 family. In terms of assembly, part of the 30S ribosomal subunit. Contacts proteins S9 and S11.

Functionally, one of the primary rRNA binding proteins, it binds directly to 16S rRNA where it nucleates assembly of the head domain of the 30S subunit. Is located at the subunit interface close to the decoding center, probably blocks exit of the E-site tRNA. The protein is Small ribosomal subunit protein uS7 of Agrobacterium fabrum (strain C58 / ATCC 33970) (Agrobacterium tumefaciens (strain C58)).